A 347-amino-acid polypeptide reads, in one-letter code: Mediator of RNA polymerase II transcription subunit 7 (347 aa).

Disordered stretches follow at residues 97-172 (GIER…TQTH) and 302-326 (VPVG…GAEE). Composition is skewed to low complexity over residues 108–171 (STTT…STQT) and 302–312 (VPVGARTGTTV).

The protein belongs to the Mediator complex subunit 7 family. Component of the Mediator complex.

It localises to the nucleus. Component of the Mediator complex, a coactivator involved in the regulated transcription of nearly all RNA polymerase II-dependent genes. Mediator functions as a bridge to convey information from gene-specific regulatory proteins to the basal RNA polymerase II transcription machinery. Mediator is recruited to promoters by direct interactions with regulatory proteins and serves as a scaffold for the assembly of a functional preinitiation complex with RNA polymerase II and the general transcription factors. The protein is Mediator of RNA polymerase II transcription subunit 7 (med-7) of Neurospora crassa (strain ATCC 24698 / 74-OR23-1A / CBS 708.71 / DSM 1257 / FGSC 987).